Here is a 465-residue protein sequence, read N- to C-terminus: Dihydrolipoyllysine-residue acetyltransferase component 5 of pyruvate dehydrogenase complex, chloroplastic (465 aa).

The transit peptide at 1–31 directs the protein to the chloroplast; sequence MSRLLQTPFLPSVSLPTKTRSSVTGFRVKPR. In terms of domain architecture, Lipoyl-binding spans 39 to 114; sequence IREIFMPALS…PVGSAIALLA (76 aa). Residue Lys-80 is modified to N6-lipoyllysine. Residues 123–148 are disordered; sequence AKAKASGGGGGGDSKAPPASPPTAAV. Residues 136 to 148 are compositionally biased toward low complexity; sequence SKAPPASPPTAAV. Residues 184–221 form the Peripheral subunit-binding (PSBD) domain; the sequence is VASPYAKKLAKELKVELAGLVGSGPMGRIVAKDVEAVA. Residue His-438 is part of the active site.

Belongs to the 2-oxoacid dehydrogenase family. The cofactor is (R)-lipoate.

It is found in the plastid. The protein resides in the chloroplast stroma. The catalysed reaction is N(6)-[(R)-dihydrolipoyl]-L-lysyl-[protein] + acetyl-CoA = N(6)-[(R)-S(8)-acetyldihydrolipoyl]-L-lysyl-[protein] + CoA. In terms of biological role, the pyruvate dehydrogenase complex catalyzes the overall conversion of pyruvate to acetyl-CoA and CO(2). It contains multiple copies of three enzymatic components: pyruvate dehydrogenase (E1), dihydrolipoamide acetyltransferase (E2) and lipoamide dehydrogenase (E3). This Arabidopsis thaliana (Mouse-ear cress) protein is Dihydrolipoyllysine-residue acetyltransferase component 5 of pyruvate dehydrogenase complex, chloroplastic (EMB3003).